Consider the following 228-residue polypeptide: Death domain-containing membrane protein NRADD (228 aa).

Topologically, residues 1 to 52 are extracellular; sequence MLYNVSKGVVYSDTALQGQDGDREGMWVGAGGALAPNTSSLFPPEPPGASSN. Residues N4 and N37 are each glycosylated (N-linked (GlcNAc...) asparagine). A helical; Signal-anchor for type III membrane protein membrane pass occupies residues 53-73; it reads IIPVYCALLATVILGLLAYVA. Topologically, residues 74–228 are cytoplasmic; it reads FKCWRSHKQR…SSPAESSSVV (155 aa). The disordered stretch occupies residues 87–122; it reads AKARTVELGDPDRDQRRGDSNVFVDSPPSLEPCIPS. Basic and acidic residues predominate over residues 90–105; it reads RTVELGDPDRDQRRGD. The Death domain occupies 143–222; sequence EEVQRLLMMG…DVVQVLSSPA (80 aa).

In terms of assembly, interacts with NGFR. Interacts with NTRK1. Interacts with SORT1. Detected in lung and testis.

It is found in the cell membrane. Its subcellular location is the nucleus. Its function is as follows. Modulates NTRK1 signaling. Can activate several intracellular signaling pathways, leading to activation of JUN. Promotes apoptosis. Promotes translocation of SORT1 to the cell membrane, and thereby hinders lysosomal degradation of SOTR1 and promotes its interaction with NGFR. The sequence is that of Death domain-containing membrane protein NRADD (Nradd) from Mus musculus (Mouse).